The following is a 487-amino-acid chain: Probable glutamate receptor (487 aa).

Positions 1–23 are cleaved as a signal peptide; sequence MDKGQHFVFFVLTTVLLLRESSH. At 24-169 the chain is on the extracellular side; that stretch reads AGAMRNDAAA…FFHFLAPFSK (146 aa). N-linked (GlcNAc...) asparagine glycosylation is present at Asn-104. The helical transmembrane segment at 170–190 threads the bilayer; the sequence is ETWTGLLFAYILTCFCLFLVA. Residues 191 to 235 lie on the Cytoplasmic side of the membrane; that stretch reads RLSPCEWNEPKNEENHFTFLNSLWFGAGALALQGVTPRPKALSVR. The helical transmembrane segment at 236 to 256 threads the bilayer; it reads VIAAIWWLFTIALLAAYIANF. Residues 257–419 lie on the Extracellular side of the membrane; sequence TALLSSGSEQ…ERWSPLQPQA (163 aa). Residues 420–440 form a helical membrane-spanning segment; it reads LGGLFLTLAIGLALGVIAAVV. Over 441 to 487 the chain is Cytoplasmic; the sequence is ELSNKSRHAAGHVKKSCCSIFTEEMCTRLRIKENTRQSQETSGRANA.

It belongs to the glutamate-gated ion channel (TC 1.A.10.1) family.

The protein localises to the cell membrane. It is found in the postsynaptic cell membrane. Receptor for glutamate. L-glutamate acts as an excitatory neurotransmitter at many synapses in the central nervous system. The postsynaptic actions of Glu are mediated by a variety of receptors that are named according to their selective agonists. The polypeptide is Probable glutamate receptor (KBP) (Anas platyrhynchos (Mallard)).